The primary structure comprises 769 residues: Post-GPI attachment to proteins factor 6 (769 aa).

The first 33 residues, Met1–Ala33, serve as a signal peptide directing secretion. Residues Ser34–Arg543 are Extracellular-facing. Residues Asn138 and Asn411 are each glycosylated (N-linked (GlcNAc...) asparagine). Residues Pro495–Thr531 enclose the EGF-like domain. Cystine bridges form between Cys496–Cys506, Cys500–Cys519, and Cys521–Cys530. Residues Ala544–Leu564 traverse the membrane as a helical segment. Residues His565–Ser567 lie on the Cytoplasmic side of the membrane. Residues Phe568 to Cys588 traverse the membrane as a helical segment. Topologically, residues Asp589 to Thr603 are extracellular. Residues Leu604–Ala624 traverse the membrane as a helical segment. The Cytoplasmic portion of the chain corresponds to Arg625 to Lys627. The chain crosses the membrane as a helical span at residues Thr628 to Met648. Over Asp649 to Arg651 the chain is Extracellular. The chain crosses the membrane as a helical span at residues Gly652–Ile672. The Cytoplasmic portion of the chain corresponds to Tyr673–Arg688. A helical membrane pass occupies residues Trp689 to Ser709. The Extracellular portion of the chain corresponds to Met710–Asn715. The chain crosses the membrane as a helical span at residues Tyr716–Pro736. At Pro737–Thr769 the chain is on the cytoplasmic side.

Belongs to the TMEM8 family. Glycosylated.

It is found in the cell membrane. The protein localises to the lysosome membrane. The catalysed reaction is a 1,2-diacyl-sn-glycero-3-phosphocholine + H2O = a 1-acyl-sn-glycero-3-phosphocholine + a fatty acid + H(+). Involved in the lipid remodeling steps of GPI-anchor maturation. Lipid remodeling steps consist in the generation of 2 saturated fatty chains at the sn-2 position of GPI-anchor proteins (GPI-AP). Has phospholipase A2 activity that removes an acyl-chain at the sn-2 position of GPI-anchors during the remodeling of GPI. Required for the shedding of the GPI-AP CRIPTO, but not CFC1, at the cell surface. Shedding of CRIPTO modulates Nodal signaling by allowing soluble CRIPTO to act as a Nodal coreceptor on other cells. Also indirectly involved in the translocation of RAC1 from the cytosol to the plasma membrane by maintaining the steady state amount of CAV1-enriched plasma membrane subdomains, stabilizing RAC1 at the plasma membrane. The sequence is that of Post-GPI attachment to proteins factor 6 from Mus musculus (Mouse).